The primary structure comprises 41 residues: MKDFKIYLSTAPVVAFAWLTFTAGFIIEINRFFPDPLVFSF.

The helical transmembrane segment at 7–27 (YLSTAPVVAFAWLTFTAGFII) threads the bilayer.

The protein belongs to the PsaJ family.

The protein localises to the plastid. The protein resides in the chloroplast thylakoid membrane. Functionally, may help in the organization of the PsaE and PsaF subunits. The protein is Photosystem I reaction center subunit IX of Stigeoclonium helveticum (Green alga).